The sequence spans 291 residues: N-acetylmannosamine kinase (291 aa).

ATP contacts are provided by residues 5 to 12 and 132 to 139; these read AIDIGGTK and GVGGGVVS. Positions 156, 166, 168, and 173 each coordinate Zn(2+).

The protein belongs to the ROK (NagC/XylR) family. NanK subfamily. As to quaternary structure, homodimer.

It carries out the reaction an N-acyl-D-mannosamine + ATP = an N-acyl-D-mannosamine 6-phosphate + ADP + H(+). It participates in amino-sugar metabolism; N-acetylneuraminate degradation; D-fructose 6-phosphate from N-acetylneuraminate: step 2/5. Catalyzes the phosphorylation of N-acetylmannosamine (ManNAc) to ManNAc-6-P. This is N-acetylmannosamine kinase from Escherichia coli O7:K1 (strain IAI39 / ExPEC).